Here is a 511-residue protein sequence, read N- to C-terminus: Sulfate adenylyltransferase (511 aa).

The N-terminal stretch occupies residues 1–167 (MPAPHGGILQ…LEAIQLPQHY (167 aa)). Positions 168-393 (DYPGLRKTPA…LRESNPPRPK (226 aa)) are catalytic. Gln195 lines the sulfate pocket. ATP contacts are provided by residues 195–198 (QTRN) and 289–292 (GRDH). Catalysis depends on residues Thr196, Arg197, and Asn198. A sulfate-binding site is contributed by Arg197. Ala293 serves as a coordination point for sulfate. Val331 is a binding site for ATP. The interval 394–511 (QGFSIVLGNS…FLEDNGFFVF (118 aa)) is required for oligomerization; adenylyl-sulfate kinase-like.

Belongs to the sulfate adenylyltransferase family. Homohexamer. Dimer of trimers.

It localises to the cytoplasm. It carries out the reaction sulfate + ATP + H(+) = adenosine 5'-phosphosulfate + diphosphate. It participates in sulfur metabolism; hydrogen sulfide biosynthesis; sulfite from sulfate: step 1/3. Catalyzes the first intracellular reaction of sulfate assimilation, forming adenosine-5'-phosphosulfate (APS) from inorganic sulfate and ATP. Plays an important role in sulfate activation as a component of the biosynthesis pathway of sulfur-containing amino acids. The sequence is that of Sulfate adenylyltransferase from Saccharomyces cerevisiae (strain ATCC 204508 / S288c) (Baker's yeast).